A 423-amino-acid chain; its full sequence is Protein CLP1 homolog (423 aa).

Residues E16, K57, and 119 to 124 each bind ATP; that span reads DVGKST.

This sequence belongs to the Clp1 family. Clp1 subfamily.

It localises to the nucleus. Its function is as follows. Required for endonucleolytic cleavage during polyadenylation-dependent pre-mRNA 3'-end formation. The sequence is that of Protein CLP1 homolog (cbc) from Drosophila simulans (Fruit fly).